Consider the following 791-residue polypeptide: IQ motif and ubiquitin-like domain-containing protein (791 aa).

The interval 1 to 73 is disordered; that stretch reads MSNQQEKYEA…SDQSFSSLEP (73 aa). In terms of domain architecture, Ubiquitin-like spans 131-207; the sequence is ATVKVVLIPV…VQVEIFSTNP (77 aa). The IQ domain occupies 338–367; sequence RLKAVIVIQTYYRQWHAKIFVENLRRQKSL.

Component of the axonemal radial spoke 1 (RS1) complex, at least composed of spoke head proteins RSPH1, RSPH3, RSPH9 and the cilia-specific component RSPH4A or sperm-specific component RSPH6A, spoke stalk proteins RSPH14, DNAJB13, DYDC1, ROPN1L and NME5, and the anchor protein IQUB. Does not appear to be part of radial spoke complexes 2 or 3 (RS2 or RS3). Interacts with CALM1. Interacts with DNAJB13. Interacts with DYNLL2. Interacts with NME5. Interacts with RSPH3. Interacts with RSPH9. Interacts with ZMYND10. Interacts with calmodulin; the interaction occurs in conditions of low but not high calcium.

It localises to the cytoplasm. It is found in the cytoskeleton. Its subcellular location is the flagellum axoneme. The protein resides in the cell projection. The protein localises to the cilium. Its function is as follows. Adapter protein that anchors the radial spoke 1 (RS1) complex to the A microtubule of outer doublet microtubules in axonemes. The triple radial spokes (RS1, RS2 and RS3) are required to modulate beating of the sperm flagellum. May play a role in inhibiting signaling via MAPK1/ERK2 and MAPK3/ERK1. Additionally, may play a role in the functioning of cilia. Not required for the functioning of tracheal or ependymal cilia. This Homo sapiens (Human) protein is IQ motif and ubiquitin-like domain-containing protein (IQUB).